We begin with the raw amino-acid sequence, 134 residues long: 15.4 kDa class V heat shock protein (134 aa).

One can recognise a sHSP domain in the interval serine 19–serine 126.

It belongs to the small heat shock protein (HSP20) family. As to quaternary structure, may form oligomeric structures.

It localises to the cytoplasm. This chain is 15.4 kDa class V heat shock protein (HSP15.4), found in Arabidopsis thaliana (Mouse-ear cress).